Here is a 502-residue protein sequence, read N- to C-terminus: Zinc finger protein 488 (502 aa).

Positions 8–130 constitute an SET domain; the sequence is RSLWTNDSKI…EGEELLVWYD (123 aa). Residue tyrosine 129 coordinates S-adenosyl-L-methionine. The segment at 151 to 174 adopts a C2H2-type 1; atypical zinc-finger fold; sequence YTCTRCGQAFKNENPFLAHCRFLC. 2 disordered regions span residues 267–303 and 338–361; these read SEPT…KSSR and PSKR…LDSF. Over residues 269-286 the composition is skewed to polar residues; that stretch reads PTDNAQTNESKISKNSAF. C2H2-type zinc fingers lie at residues 438–460 and 479–501; these read NWCA…MRSH and LTCP…MTSH.

This sequence belongs to the krueppel C2H2-type zinc-finger protein family. In terms of tissue distribution, expressed in pMN progenitors and oligodendrocyte lineage cells in the embryo with expression declining in oligodendrocytes undergoing differentiation.

It is found in the nucleus. Its function is as follows. Transcriptional repressor. May have histone methyltransferase activity. Negatively regulates shh signaling activity in pMN progenitor cells which prevents their switch from motor neuron to oligodendrocyte precursor cell production. Independently of shh activity, also regulates oligodendrocyte formation. The polypeptide is Zinc finger protein 488 (Danio rerio (Zebrafish)).